Here is a 178-residue protein sequence, read N- to C-terminus: MAELTTLARPYAKAAFEHAQAHQQLANWSAMLGLAAAVSEDGTMQRLLKAPQLTSAEKAAAFIEVCGDKFDAQAQNFIHVAAENDRLLLLPEISALFDLYKAEQEKSVDVEVTSAFALNQEQQDKLAKVLSARLGQEVRLHASEDASLIGGVVIRAGDLVIDGSVRGKIAKLAEALKS.

Belongs to the ATPase delta chain family. F-type ATPases have 2 components, F(1) - the catalytic core - and F(0) - the membrane proton channel. F(1) has five subunits: alpha(3), beta(3), gamma(1), delta(1), epsilon(1). F(0) has three main subunits: a(1), b(2) and c(10-14). The alpha and beta chains form an alternating ring which encloses part of the gamma chain. F(1) is attached to F(0) by a central stalk formed by the gamma and epsilon chains, while a peripheral stalk is formed by the delta and b chains.

It localises to the cell inner membrane. F(1)F(0) ATP synthase produces ATP from ADP in the presence of a proton or sodium gradient. F-type ATPases consist of two structural domains, F(1) containing the extramembraneous catalytic core and F(0) containing the membrane proton channel, linked together by a central stalk and a peripheral stalk. During catalysis, ATP synthesis in the catalytic domain of F(1) is coupled via a rotary mechanism of the central stalk subunits to proton translocation. Functionally, this protein is part of the stalk that links CF(0) to CF(1). It either transmits conformational changes from CF(0) to CF(1) or is implicated in proton conduction. The polypeptide is ATP synthase subunit delta (Pseudomonas entomophila (strain L48)).